The sequence spans 401 residues: Tryptophan synthase beta chain (401 aa).

Position 91 is an N6-(pyridoxal phosphate)lysine (Lys91).

This sequence belongs to the TrpB family. In terms of assembly, tetramer of two alpha and two beta chains. It depends on pyridoxal 5'-phosphate as a cofactor.

The catalysed reaction is (1S,2R)-1-C-(indol-3-yl)glycerol 3-phosphate + L-serine = D-glyceraldehyde 3-phosphate + L-tryptophan + H2O. It participates in amino-acid biosynthesis; L-tryptophan biosynthesis; L-tryptophan from chorismate: step 5/5. In terms of biological role, the beta subunit is responsible for the synthesis of L-tryptophan from indole and L-serine. In Lactococcus lactis subsp. cremoris (strain SK11), this protein is Tryptophan synthase beta chain.